A 244-amino-acid chain; its full sequence is MTRVAVVAGGGEHTGPAVALRLAAGGFDVALLGSEFTSADKTVRRVEEYGRQCVTVRAELSDARSVAVAFGRVRTALSGPAVLVTCVGPQPLPDGLPEDESADEQRYTAVRRALRPVFVCCQAGAGQLLRHRWGRIIIVTEPADADGNTWRTSRPVLDGLIGFTRSAALELARSGTTVNLVAPADRAADSRAPAHRAAGDDSAGSYADGVAHVTEFLVDERAVGITGQAIRVAARADVPLLRER.

Residues 9-12 (GGGE), 59-60 (EL), and 154-158 (RPVLD) each bind NADP(+).

The protein belongs to the short-chain dehydrogenases/reductases (SDR) family. In terms of assembly, heterotetramer; the NovJ(2)K(2) heterotetramer is composed of subunits of 2 NovJ and 2 subunits of NovK.

It functions in the pathway antibiotic biosynthesis; novobiocin biosynthesis. Its function is as follows. Non-catalytic subunit of the NovJ(2)K(2) heterotetramer that catalyzes the NADPH-dependent reduction of the tyrosyl moiety of L-beta-OH-Tyr-S-NovH intermediate to yield the tethered beta-ketotyrosyl-S-NovH in the novobiocin biosynthesis pathway. Novobiocin is an aminocoumarin family antibiotic that targets bacterial DNA gyrases. This chain is Short-chain dehydrogenase/reductase family member NovK (novK), found in Streptomyces niveus (Streptomyces spheroides).